A 762-amino-acid polypeptide reads, in one-letter code: uncharacterized protein (762 aa).

The MCM domain maps to 334-542; that stretch reads IIDILSNYLI…SDEEIAEHIL (209 aa). ATP is bound at residue 384-391; that stretch reads TDPGIGKS.

The protein belongs to the MCM family.

This is an uncharacterized protein from Methanocaldococcus jannaschii (strain ATCC 43067 / DSM 2661 / JAL-1 / JCM 10045 / NBRC 100440) (Methanococcus jannaschii).